A 127-amino-acid chain; its full sequence is F420-non-reducing hydrogenase subunit G (127 aa).

This sequence belongs to the [NiFe]/[NiFeSe] hydrogenase small subunit family. The F420-non-reducing hydrogenase is composed of three subunits; MvhA, MvhD and MvhG. It forms a complex with the heterodisulfide reductase (hdr).

In terms of biological role, part of a complex that provides reducing equivalents for heterodisulfide reductase. In Methanothermus fervidus, this protein is F420-non-reducing hydrogenase subunit G (mvhG).